The following is a 673-amino-acid chain: MLVLLCCVVLHVGVARICCSHEPKWQLVWSDEFTNGISSDWEFEMGNGLNGWGNNELQYYRRENAQVEGGKLVITAKREDYDGFKYTSARLKTQFDKSWKYGKIEAKMAIPSFRGVWVMFWMSGDNTNYVRWPSSGEIDFIEHRNTNNEKVRGTIHWSTPDGAHAHHNRESNTNGIDYHIYSVEWNSSIVKWFVNGNQYFEVKIQGGVNGKSAFRNKVFVILNMAIGGNWPGFDVADEAFPAKMYIDYVRVYQDASTSSPVGDTSLDGYYFVQNRHSELYLDVTDASNEDGAFLQQWSYSGNENQQFDFEHLENNVYKITNKKSGKSLDVYNFGTENGVRIQQWSYGGARNQQFTVQSVGDGYYKIIPRGSGKLVEVADFSKDAGGKIQQWSDNNQLSGQWKLIKSKSYSKLIQAESYFDSSKVQLEDTSDVGGGKNVKCDNEGAWMAYKDIDFPSSGNYRIEYRVASERAGGKLSLDLNAGSIVLGMLDVPSTGGWQKWTTISHTVNVDSGTYNLGIYVQRASWNINWIKITKIPEQSNLNQGRRNSKLIQAESYFSYSEVQLEDTLDVGGGKNVKCDKEGAWMAYKDIDFPSSGSYRVEYRVASERAGGKLSLDLNAGSIVLGMLDIPSTGGLQKWTTISHIVNVDLGTYNLGIYVQKASWNINWIRITKV.

The N-terminal stretch at 1–19 is a signal peptide; it reads MLVLLCCVVLHVGVARICC. A GH16 domain is found at 27 to 257; the sequence is LVWSDEFTNG…YVRVYQDAST (231 aa). Glu137 (nucleophile) is an active-site residue. Glu142 functions as the Proton donor in the catalytic mechanism. Asn186 carries an N-linked (GlcNAc...) asparagine glycan. Residues 266–404 enclose the Ricin B-type lectin domain; the sequence is LDGYYFVQNR…NQLSGQWKLI (139 aa). 2 CBM6 domains span residues 411 to 533 and 549 to 671; these read KLIQ…IKIT and KLIQ…IRIT.

It belongs to the glycosyl hydrolase 16 family. As to quaternary structure, clotting factor G is a heterodimer composed of two non-covalently associated subunits, alpha and beta. In presence of (1-&gt;3)-beta-glucan, proteolytically cleaved into a 55kDa and a 17kDa forms. In terms of tissue distribution, expressed in hemocytes (at protein level).

In terms of biological role, component of the heterodimer clotting factor G which may play a role in defense mechanisms against fungi. Initiates a (1-&gt;3)-beta-glucan-sensing clotting pathway whereby the alpha subunit binds to glucans containing (1-&gt;3)-beta linkages, which are components of the fungal cell wall, and the beta subunit catalyzes the activation of proclotting enzyme. This chain is Clotting factor G alpha subunit, found in Tachypleus tridentatus (Japanese horseshoe crab).